A 392-amino-acid polypeptide reads, in one-letter code: Phosphoglycerate kinase (392 aa).

Substrate contacts are provided by residues 21-23 (DLN), arginine 36, 59-62 (HLGR), arginine 114, and arginine 147. Residues lysine 198, glutamate 320, and 346–349 (GGDT) each bind ATP.

The protein belongs to the phosphoglycerate kinase family. In terms of assembly, monomer.

It localises to the cytoplasm. The enzyme catalyses (2R)-3-phosphoglycerate + ATP = (2R)-3-phospho-glyceroyl phosphate + ADP. It participates in carbohydrate degradation; glycolysis; pyruvate from D-glyceraldehyde 3-phosphate: step 2/5. The polypeptide is Phosphoglycerate kinase (Nitrosomonas europaea (strain ATCC 19718 / CIP 103999 / KCTC 2705 / NBRC 14298)).